A 113-amino-acid polypeptide reads, in one-letter code: uncharacterized protein (113 aa).

A disordered region spans residues 28–55 (CDGGPRRPLSRRGEEARRARAPSYEEQE).

This is an uncharacterized protein from Human cytomegalovirus (strain AD169) (HHV-5).